The primary structure comprises 248 residues: MRHAFRHSVRTLGLLGLLPVLSACNSLAQMSEIGRPPRMTSITDPTLANSYRPVTMPMPPLQAPPDEAASLWRSGSKAFFKDQRASQVGDLVTIIVDITDNAAFNNGTTADRTADEKFGIPNLFGIKGKVISAITGADSLSTASSSDSGATGKITRNETVTLRLAGTITQVLPNGNFVVMGKQEVRVNSELRELGVSGIVRPQDITADNTVTHDRMAEARISYGGRGTLTQLQTPRYGQQVMDAILPF.

Positions 1–23 are cleaved as a signal peptide; that stretch reads MRHAFRHSVRTLGLLGLLPVLSA. C24 is lipidated: N-palmitoyl cysteine. The S-diacylglycerol cysteine moiety is linked to residue C24.

This sequence belongs to the FlgH family. In terms of assembly, the basal body constitutes a major portion of the flagellar organelle and consists of four rings (L,P,S, and M) mounted on a central rod.

The protein localises to the cell outer membrane. It is found in the bacterial flagellum basal body. Functionally, assembles around the rod to form the L-ring and probably protects the motor/basal body from shearing forces during rotation. The protein is Flagellar L-ring protein of Gluconobacter oxydans (strain 621H) (Gluconobacter suboxydans).